The chain runs to 445 residues: Tubulin beta-2 chain (445 aa).

GTP-binding residues include Q11, E69, S138, G142, T143, G144, N204, and N226. E69 contacts Mg(2+). The interval 424-445 is disordered; the sequence is QYQDATAEDEGEFDEDEEVEEA. Positions 429–445 are enriched in acidic residues; that stretch reads TAEDEGEFDEDEEVEEA.

The protein belongs to the tubulin family. In terms of assembly, dimer of alpha and beta chains. A typical microtubule is a hollow water-filled tube with an outer diameter of 25 nm and an inner diameter of 15 nM. Alpha-beta heterodimers associate head-to-tail to form protofilaments running lengthwise along the microtubule wall with the beta-tubulin subunit facing the microtubule plus end conferring a structural polarity. Microtubules usually have 13 protofilaments but different protofilament numbers can be found in some organisms and specialized cells. It depends on Mg(2+) as a cofactor.

The protein resides in the cytoplasm. It is found in the cytoskeleton. Tubulin is the major constituent of microtubules, a cylinder consisting of laterally associated linear protofilaments composed of alpha- and beta-tubulin heterodimers. Microtubules grow by the addition of GTP-tubulin dimers to the microtubule end, where a stabilizing cap forms. Below the cap, tubulin dimers are in GDP-bound state, owing to GTPase activity of alpha-tubulin. The protein is Tubulin beta-2 chain (TUB-2) of Echinococcus multilocularis (Fox tapeworm).